The sequence spans 275 residues: Large ribosomal subunit protein uL2 (275 aa).

Residues 224–275 (AMNPVDHPHGGGEGKAPIGHPGPLTPWGKPALGYKTRKKGKASDKFIIRRRK) are disordered. Basic and acidic residues predominate over residues 264-275 (KASDKFIIRRRK).

The protein belongs to the universal ribosomal protein uL2 family. Part of the 50S ribosomal subunit. Forms a bridge to the 30S subunit in the 70S ribosome.

In terms of biological role, one of the primary rRNA binding proteins. Required for association of the 30S and 50S subunits to form the 70S ribosome, for tRNA binding and peptide bond formation. It has been suggested to have peptidyltransferase activity; this is somewhat controversial. Makes several contacts with the 16S rRNA in the 70S ribosome. This Thermoanaerobacter pseudethanolicus (strain ATCC 33223 / 39E) (Clostridium thermohydrosulfuricum) protein is Large ribosomal subunit protein uL2.